Reading from the N-terminus, the 199-residue chain is Recombination protein RecR (199 aa).

A C4-type zinc finger spans residues 58 to 73 (CSACGNVDTQDPCAIC). Positions 81–176 (HILCIVEEVG…SVSRLAHGVP (96 aa)) constitute a Toprim domain.

Belongs to the RecR family.

Functionally, may play a role in DNA repair. It seems to be involved in an RecBC-independent recombinational process of DNA repair. It may act with RecF and RecO. The protein is Recombination protein RecR of Parvibaculum lavamentivorans (strain DS-1 / DSM 13023 / NCIMB 13966).